The primary structure comprises 169 residues: S-ribosylhomocysteine lyase (169 aa).

Positions 54, 58, and 128 each coordinate Fe cation.

It belongs to the LuxS family. As to quaternary structure, homodimer. Fe cation serves as cofactor.

It carries out the reaction S-(5-deoxy-D-ribos-5-yl)-L-homocysteine = (S)-4,5-dihydroxypentane-2,3-dione + L-homocysteine. Its function is as follows. Involved in the synthesis of autoinducer 2 (AI-2) which is secreted by bacteria and is used to communicate both the cell density and the metabolic potential of the environment. The regulation of gene expression in response to changes in cell density is called quorum sensing. Catalyzes the transformation of S-ribosylhomocysteine (RHC) to homocysteine (HC) and 4,5-dihydroxy-2,3-pentadione (DPD). The polypeptide is S-ribosylhomocysteine lyase (Tolumonas auensis (strain DSM 9187 / NBRC 110442 / TA 4)).